The sequence spans 172 residues: Protein PLASTID REDOX INSENSITIVE 2, chloroplastic (172 aa).

The transit peptide at 1–54 (MAARLWAAAVAPATLNPPLLTLSASSSPSSSRLRRSVLGRLRSRAPRPADFVCR) directs the protein to the chloroplast.

Its subcellular location is the plastid. It localises to the chloroplast stroma. The protein localises to the chloroplast nucleoid. In terms of biological role, required for the activity of the plastid-encoded RNA polymerase (PEP) and full expression of genes transcribed by PEP. This Oryza sativa subsp. japonica (Rice) protein is Protein PLASTID REDOX INSENSITIVE 2, chloroplastic.